The sequence spans 288 residues: Pantothenate synthetase (288 aa).

Residue 30–37 (MGNLHEGH) coordinates ATP. H37 serves as the catalytic Proton donor. Q61 contributes to the (R)-pantoate binding site. Beta-alanine is bound at residue Q61. 148–151 (GQKD) is a binding site for ATP. Q154 is a binding site for (R)-pantoate. Residues V177 and 185-188 (LSSR) contribute to the ATP site.

Belongs to the pantothenate synthetase family. As to quaternary structure, homodimer.

It localises to the cytoplasm. The enzyme catalyses (R)-pantoate + beta-alanine + ATP = (R)-pantothenate + AMP + diphosphate + H(+). Its pathway is cofactor biosynthesis; (R)-pantothenate biosynthesis; (R)-pantothenate from (R)-pantoate and beta-alanine: step 1/1. Functionally, catalyzes the condensation of pantoate with beta-alanine in an ATP-dependent reaction via a pantoyl-adenylate intermediate. The polypeptide is Pantothenate synthetase (Psychrobacter arcticus (strain DSM 17307 / VKM B-2377 / 273-4)).